A 421-amino-acid chain; its full sequence is Acyl-coenzyme A thioesterase 6 (421 aa).

Catalysis depends on charge relay system residues Ser232, Asp326, and His360. A Peroxisome targeting signal motif is present at residues 419-421 (SKI).

Belongs to the C/M/P thioester hydrolase family.

Its subcellular location is the peroxisome. The protein resides in the cytoplasm. It catalyses the reaction pristanoyl-CoA + H2O = 2,6,10,14-tetramethylpentadecanoate + CoA + H(+). The enzyme catalyses phytanoyl-CoA + H2O = 3,7,11,15-tetramethylhexadecanoate + CoA + H(+). The protein operates within lipid metabolism; fatty acid metabolism. Its function is as follows. Catalyzes the hydrolysis of acyl-CoAs into free fatty acids and coenzyme A (CoASH), regulating their respective intracellular levels. Catalyzes the hydrolysis of phytanoyl-CoA and pristanoyl-CoA, two methyl-branched fatty acids derived from phytol, that enter the body via the diet. The protein is Acyl-coenzyme A thioesterase 6 of Homo sapiens (Human).